We begin with the raw amino-acid sequence, 1012 residues long: Probable inorganic carbon transporter subunit DabA (1012 aa).

Residues cysteine 489, aspartate 491, histidine 679, and cysteine 694 each contribute to the Zn(2+) site.

This sequence belongs to the inorganic carbon transporter (TC 9.A.2) DabA family. As to quaternary structure, forms a complex with DabB. Zn(2+) is required as a cofactor.

It localises to the cell inner membrane. In terms of biological role, part of an energy-coupled inorganic carbon pump. This is Probable inorganic carbon transporter subunit DabA from Dechloromonas aromatica (strain RCB).